The sequence spans 283 residues: uncharacterized protein (283 aa).

3 Solcar repeats span residues 14–95 (QPVW…LKHL), 102–185 (NDHA…SEAV), and 190–274 (GLAL…TLQG). Helical transmembrane passes span 20 to 40 (TLAGGISSVICRFMIAPFDVI), 70 to 90 (GNVVAELLYLVYGAAEFVAFS), 105 to 125 (AVNFLCGTSAGIFATLTSYPL), 157 to 177 (FFPGLKFSVIQIGPYAGCFFM), 184 to 204 (AVLSPLGLALSSTLSGVIAGA), and 249 to 266 (GLSVSMLKVAPGRAITML).

This sequence belongs to the mitochondrial carrier (TC 2.A.29) family.

The protein localises to the mitochondrion inner membrane. This is an uncharacterized protein from Schizosaccharomyces pombe (strain 972 / ATCC 24843) (Fission yeast).